We begin with the raw amino-acid sequence, 436 residues long: GTPase Der (436 aa).

2 EngA-type G domains span residues 4–167 and 176–351; these read PVVA…KNIP and VQFC…ENHS. Residues 10–17, 57–61, 119–122, 182–189, 229–233, and 294–297 each bind GTP; these read GRPNVGKS, DTGGI, NKVD, DTAGM, and NKWD. One can recognise a KH-like domain in the interval 352–436; sequence MRVQTNILND…PIRIFARARK (85 aa).

Belongs to the TRAFAC class TrmE-Era-EngA-EngB-Septin-like GTPase superfamily. EngA (Der) GTPase family. As to quaternary structure, associates with the 50S ribosomal subunit.

GTPase that plays an essential role in the late steps of ribosome biogenesis. This Bacillus licheniformis (strain ATCC 14580 / DSM 13 / JCM 2505 / CCUG 7422 / NBRC 12200 / NCIMB 9375 / NCTC 10341 / NRRL NRS-1264 / Gibson 46) protein is GTPase Der.